Consider the following 267-residue polypeptide: Small ribosomal subunit protein uS2 (267 aa).

The disordered stretch occupies residues 224–267; sequence GRQGEDQVDEKTFEGQKSEAAEGDKKTADNSMEDIVNAVEGDNK. The span at 225–251 shows a compositional bias: basic and acidic residues; the sequence is RQGEDQVDEKTFEGQKSEAAEGDKKTA.

This sequence belongs to the universal ribosomal protein uS2 family.

The sequence is that of Small ribosomal subunit protein uS2 from Levilactobacillus brevis (strain ATCC 367 / BCRC 12310 / CIP 105137 / JCM 1170 / LMG 11437 / NCIMB 947 / NCTC 947) (Lactobacillus brevis).